The following is a 273-amino-acid chain: Beta-lactamase OXA-133 (273 aa).

The signal sequence occupies residues 1 to 17; sequence MNKYFTCYVVASLFFSG. C18 is lipidated: N-palmitoyl cysteine. C18 is lipidated: S-diacylglycerol cysteine. Residue S79 is the Acyl-ester intermediate of the active site. K82 is subject to N6-carboxylysine. 216–218 is a substrate binding site; that stretch reads KTG.

The protein belongs to the class-D beta-lactamase family.

The protein localises to the cell membrane. The enzyme catalyses a beta-lactam + H2O = a substituted beta-amino acid. Functionally, catalyzes the hydrolysis of beta-lactam antibiotics. This chain is Beta-lactamase OXA-133, found in Acinetobacter radioresistens.